A 110-amino-acid chain; its full sequence is Endoribonuclease SymE (110 aa).

The 46-residue stretch at Ser29–Pro74 folds into the SpoVT-AbrB domain.

Belongs to the SymE family.

The protein localises to the cytoplasm. Involved in the degradation and recycling of damaged RNA. It is itself a target for degradation by the ATP-dependent protease Lon. The chain is Endoribonuclease SymE from Salmonella paratyphi C (strain RKS4594).